We begin with the raw amino-acid sequence, 163 residues long: Nucleotide-binding protein Dhaf_3127 (163 aa).

The protein belongs to the YajQ family.

Nucleotide-binding protein. The sequence is that of Nucleotide-binding protein Dhaf_3127 from Desulfitobacterium hafniense (strain DSM 10664 / DCB-2).